The sequence spans 415 residues: UDP-N-acetylglucosamine 1-carboxyvinyltransferase 1 (415 aa).

Phosphoenolpyruvate is bound at residue 23–24 (KN). Arg-92 lines the UDP-N-acetyl-alpha-D-glucosamine pocket. Cys-116 acts as the Proton donor in catalysis. Cys-116 carries the post-translational modification 2-(S-cysteinyl)pyruvic acid O-phosphothioketal. UDP-N-acetyl-alpha-D-glucosamine contacts are provided by residues 121–125 (RPIDL), Asp-304, and Val-326.

This sequence belongs to the EPSP synthase family. MurA subfamily.

Its subcellular location is the cytoplasm. It carries out the reaction phosphoenolpyruvate + UDP-N-acetyl-alpha-D-glucosamine = UDP-N-acetyl-3-O-(1-carboxyvinyl)-alpha-D-glucosamine + phosphate. Its pathway is cell wall biogenesis; peptidoglycan biosynthesis. Cell wall formation. Adds enolpyruvyl to UDP-N-acetylglucosamine. The protein is UDP-N-acetylglucosamine 1-carboxyvinyltransferase 1 of Caldanaerobacter subterraneus subsp. tengcongensis (strain DSM 15242 / JCM 11007 / NBRC 100824 / MB4) (Thermoanaerobacter tengcongensis).